The primary structure comprises 246 residues: 1-(5-phosphoribosyl)-5-[(5-phosphoribosylamino)methylideneamino] imidazole-4-carboxamide isomerase (246 aa).

Residue Asp-8 is the Proton acceptor of the active site. The active-site Proton donor is the Asp-129.

It belongs to the HisA/HisF family.

It is found in the cytoplasm. The enzyme catalyses 1-(5-phospho-beta-D-ribosyl)-5-[(5-phospho-beta-D-ribosylamino)methylideneamino]imidazole-4-carboxamide = 5-[(5-phospho-1-deoxy-D-ribulos-1-ylimino)methylamino]-1-(5-phospho-beta-D-ribosyl)imidazole-4-carboxamide. The protein operates within amino-acid biosynthesis; L-histidine biosynthesis; L-histidine from 5-phospho-alpha-D-ribose 1-diphosphate: step 4/9. This is 1-(5-phosphoribosyl)-5-[(5-phosphoribosylamino)methylideneamino] imidazole-4-carboxamide isomerase from Nitrobacter hamburgensis (strain DSM 10229 / NCIMB 13809 / X14).